The following is a 211-amino-acid chain: Mitotic spindle assembly checkpoint protein MAD2B (211 aa).

Positions 13 to 203 (QVVADVLCEF…SDILKMQLYV (191 aa)) constitute an HORMA domain. Positions 21 to 155 (EFLEVAVHLI…FTVLVHTREA (135 aa)) are mediates interaction with REV1 and REV3L and homodimerization. Positions 150–211 (VHTREAATRN…YVEERAHKGS (62 aa)) are mediates interaction with ipaB.

Homooligomer. Heterodimer with REV3L. This dimer forms the minimal DNA polymerase zeta complex (Pol-zeta2), with REV3L bearing DNA polymerase catalytic activity, although its activity is very low in this context. Component of the tetrameric Pol-zeta complex (Pol-zeta4), which consists of REV3L, MAD2L2, POLD2 and POLD3; Pol-zeta4 is the fully active form of DNA polymerase zeta. Component of the shieldin complex, consisting of SHLD1, SHLD2, SHLD3 and MAD2L2/REV7. Within the complex, SHLD2 forms a scaffold which interacts with a SHLD3-MAD2L2 subcomplex via its N-terminus, and with SHLD1 via its C-terminus. Interacts with REV1. Interacts with ADAM9. Interacts with CHAMP1. Interacts with FZR1 (in complex with the anaphase promoting complex APC). Interacts with CDC20; PubMed:11459825 could not detect the interaction. Interacts with RAN. Interacts with ELK1; the interaction is direct and recruits MAD2L2 to ELK1-specific promoters. May interact with the JNK kinases MAPK8 and/or MAPK9 to stimulate ELK1 phosphorylation and transcriptional activity upon DNA damage. Interacts with TCF7L2; prevents its binding to promoters and negatively modulates its transcriptional activity. Interacts with YY1AP1. Interacts with S.flexneri protein ipaB; prevents the interaction of MAD2L2 with FZR1 and CDC20 resulting in an activation of the anaphase-promoting complex APC and a cell cycle arrest. Interacts with PRCC; the interaction is direct. Interacts with POGZ. Interacts with ASTE1. As to expression, ubiquitously expressed.

It localises to the nucleus. The protein localises to the cytoplasm. Its subcellular location is the cytoskeleton. The protein resides in the spindle. It is found in the chromosome. In terms of biological role, adapter protein able to interact with different proteins and involved in different biological processes. Mediates the interaction between the error-prone DNA polymerase zeta catalytic subunit REV3L and the inserter polymerase REV1, thereby mediating the second polymerase switching in translesion DNA synthesis. Translesion DNA synthesis releases the replication blockade of replicative polymerases, stalled in presence of DNA lesions. Component of the shieldin complex, which plays an important role in repair of DNA double-stranded breaks (DSBs). During G1 and S phase of the cell cycle, the complex functions downstream of TP53BP1 to promote non-homologous end joining (NHEJ) and suppress DNA end resection. Mediates various NHEJ-dependent processes including immunoglobulin class-switch recombination, and fusion of unprotected telomeres. May also regulate another aspect of cellular response to DNA damage through regulation of the JNK-mediated phosphorylation and activation of the transcriptional activator ELK1. Inhibits the FZR1- and probably CDC20-mediated activation of the anaphase promoting complex APC thereby regulating progression through the cell cycle. Regulates TCF7L2-mediated gene transcription and may play a role in epithelial-mesenchymal transdifferentiation. The polypeptide is Mitotic spindle assembly checkpoint protein MAD2B (MAD2L2) (Homo sapiens (Human)).